A 424-amino-acid chain; its full sequence is Serine--tRNA ligase (424 aa).

Residue 229–231 (TAE) coordinates L-serine. 260-262 (RRE) contributes to the ATP binding site. Position 283 (glutamate 283) interacts with L-serine. An ATP-binding site is contributed by 347–350 (EVSS). Serine 383 contacts L-serine.

The protein belongs to the class-II aminoacyl-tRNA synthetase family. Type-1 seryl-tRNA synthetase subfamily. In terms of assembly, homodimer. The tRNA molecule binds across the dimer.

Its subcellular location is the cytoplasm. The catalysed reaction is tRNA(Ser) + L-serine + ATP = L-seryl-tRNA(Ser) + AMP + diphosphate + H(+). It catalyses the reaction tRNA(Sec) + L-serine + ATP = L-seryl-tRNA(Sec) + AMP + diphosphate + H(+). It participates in aminoacyl-tRNA biosynthesis; selenocysteinyl-tRNA(Sec) biosynthesis; L-seryl-tRNA(Sec) from L-serine and tRNA(Sec): step 1/1. Its function is as follows. Catalyzes the attachment of serine to tRNA(Ser). Is also able to aminoacylate tRNA(Sec) with serine, to form the misacylated tRNA L-seryl-tRNA(Sec), which will be further converted into selenocysteinyl-tRNA(Sec). The chain is Serine--tRNA ligase from Roseiflexus sp. (strain RS-1).